A 1020-amino-acid chain; its full sequence is MARTASGATRPSDLISWSRNGFIAYACPVQHSKDNLLLTYLENVNGNSWKLAEPQSISVKLENNFLSELALVEWSYLSTDLAISDVYGNFYILLAGIGLLEPGSEKSTVNSDSSGAASTAAASQNSPSYELTSYNHMEMIYRDIINQDPALPVNPGAAIVSFSWLNIEKVQIINKPAALVTLENQNSSNSPFVYTYGVNQFQPHGVTHPISTKQACVALRQNGQFTLYFQGEHKVEYHKTSVALSDDIVIITKASIGFTNDKQIVVTAYDSVTRNISTYSVTVDWGFLVESAKRQKVDPHYHTPKEEHKTPKLNVTRISASIPVPTFLAAAEEEGMDMDKMDVDADSEDGNQPSYQIGSLASIDIISAGAEKDSSLDILISYTFEDGSGIASSTIYRYSLSEESELISSAFGELGVRKNVTAPANSPTVQTVTLQDKLIRSGTIQSITTALSDYFILLYYLDGHVDVVDRNSMKIVNNSDDTNLPPKTISSIFDVGFNFPKIDNSSNLIMAVSPNLTSVAYADFKGGSTRLNLKVFEKEKYLGISPKELFATSVGFAFRHAYACYTNTCSDDLVALIQTEIVRLQISLQKTITDKPHNIEMIIKKFVESIVSESHKAINFQLDAFNKESVDKLLSNPPLQKLLSLQLVLGELQDKNSIVSDIAWIVLNLRSTSFGIMFSLSSIYRQISKKKPTEDSLQDSITRGECIMSLVGNVKWLIDLMVYINQELLQLSYSKQDSSNSKLTIKNSIALPIILSKVPRLFLMYALSSIGRTHEILKKLHKDLSEASKLFTPMKESLNRYFTICNNSPLTLSLFENFLRECDALITKEQSIRLAGKEKGYSLKVEQKLVCQGELTEDMEQIGKILIDRHAVNINRDMKVSDLYFYDVDWLDIGVNKRSARTSKGLSETVIYPSSQLKPKMIPRLQYSDKECIDSLRKIIISVDMNQITGKTDTSRNGTTNHKAAIANDKIAKLRKCTRCRSVSLVADPLVFDAPSTIGLWTMVFQRTCICGNAWVNCVS.

This sequence belongs to the Mediator complex subunit 16 family. In terms of assembly, component of the Mediator complex.

It is found in the nucleus. Its function is as follows. Component of the Mediator complex, a coactivator involved in the regulated transcription of nearly all RNA polymerase II-dependent genes. Mediator functions as a bridge to convey information from gene-specific regulatory proteins to the basal RNA polymerase II transcription machinery. Mediator is recruited to promoters by direct interactions with regulatory proteins and serves as a scaffold for the assembly of a functional preinitiation complex with RNA polymerase II and the general transcription factors. The protein is Mediator of RNA polymerase II transcription subunit 16 (SIN4) of Scheffersomyces stipitis (strain ATCC 58785 / CBS 6054 / NBRC 10063 / NRRL Y-11545) (Yeast).